Reading from the N-terminus, the 341-residue chain is Phenylalanine--tRNA ligase alpha subunit (341 aa).

A Mg(2+)-binding site is contributed by E256.

It belongs to the class-II aminoacyl-tRNA synthetase family. Phe-tRNA synthetase alpha subunit type 1 subfamily. As to quaternary structure, tetramer of two alpha and two beta subunits. Requires Mg(2+) as cofactor.

The protein resides in the cytoplasm. It carries out the reaction tRNA(Phe) + L-phenylalanine + ATP = L-phenylalanyl-tRNA(Phe) + AMP + diphosphate + H(+). This chain is Phenylalanine--tRNA ligase alpha subunit, found in Leptospira interrogans serogroup Icterohaemorrhagiae serovar Lai (strain 56601).